The primary structure comprises 363 residues: N-acetylmuramate/N-acetylglucosamine kinase (363 aa).

This sequence belongs to the kinase AmgK family.

The enzyme catalyses N-acetyl-D-muramate + ATP = N-acetyl-alpha-D-muramate 1-phosphate + ADP + H(+). The catalysed reaction is N-acetyl-D-glucosamine + ATP = N-acetyl-alpha-D-glucosamine 1-phosphate + ADP + H(+). The protein operates within cell wall biogenesis; peptidoglycan recycling. Its function is as follows. Sugar kinase that catalyzes the ATP-dependent phosphorylation of N-acetylmuramate (MurNAc) and N-acetylglucosamine (GlcNAc) at its C1 hydroxyl group, leading to MurNAc alpha-1P and GlcNAc alpha-1P, respectively. Is likely involved in peptidoglycan recycling as part of a cell wall recycling pathway that bypasses de novo biosynthesis of the peptidoglycan precursor UDP-MurNAc. Is able to complement the fosfomycin sensitivity phenotype of a P.putida mutant lacking amgK. This Caulobacter vibrioides (strain ATCC 19089 / CIP 103742 / CB 15) (Caulobacter crescentus) protein is N-acetylmuramate/N-acetylglucosamine kinase.